A 275-amino-acid polypeptide reads, in one-letter code: Bis(5'-nucleosyl)-tetraphosphatase, symmetrical (275 aa).

It belongs to the Ap4A hydrolase family.

The catalysed reaction is P(1),P(4)-bis(5'-adenosyl) tetraphosphate + H2O = 2 ADP + 2 H(+). Its function is as follows. Hydrolyzes diadenosine 5',5'''-P1,P4-tetraphosphate to yield ADP. This is Bis(5'-nucleosyl)-tetraphosphatase, symmetrical (apaH) from Aggregatibacter actinomycetemcomitans (Actinobacillus actinomycetemcomitans).